We begin with the raw amino-acid sequence, 304 residues long: Endonuclease III-like protein 1 (304 aa).

The N-terminal 22 residues, 1-22 (MTALSARMLTRSRSLGPGAGPR), are a transit peptide targeting the mitochondrion. The interval 1 to 72 (MTALSARMLT…SDSEKGEGAE (72 aa)) is disordered. Residues 23–42 (GCREEPGPLRRREAAAEARK) show a composition bias toward basic and acidic residues. The short motif at 28 to 52 (PGPLRRREAAAEARKSHSPVKRPRK) is the Bipartite nuclear localization signal element. A compositionally biased stretch (basic residues) spans 43–55 (SHSPVKRPRKAQR). Phosphoserine occurs at positions 63 and 65. A HhH domain is found at 191–215 (HYGGDIPASVAELVALPGVGPKMAH). K212 serves as the catalytic Nucleophile; for N-glycosylase activity. [4Fe-4S] cluster-binding residues include C282, C289, C292, and C298.

This sequence belongs to the Nth/MutY family. In terms of assembly, interacts with YBX1. Interacts with ERCC5/XPG; the interaction stimulates NTHL1 activity and NTHL1 binding to its DNA substrate. [4Fe-4S] cluster serves as cofactor. Ubiquitinated by TRIM26; leading to proteasomal degradation. As to expression, widely expressed with highest levels in heart and lowest levels in lung and liver.

Its subcellular location is the nucleus. The protein localises to the mitochondrion. The catalysed reaction is 2'-deoxyribonucleotide-(2'-deoxyribose 5'-phosphate)-2'-deoxyribonucleotide-DNA = a 3'-end 2'-deoxyribonucleotide-(2,3-dehydro-2,3-deoxyribose 5'-phosphate)-DNA + a 5'-end 5'-phospho-2'-deoxyribonucleoside-DNA + H(+). APE1 displaces NTHL1 from the N-glycosylase-generated AP site in DNA, thereby increasing the turnover of the DNA N-glycosylase activity. AP lyase activity is stimulated by YBX1. ERCC5/XPG stimulates NTHL1 activity and NTHL1 binding to its DNA substrate. Bifunctional DNA N-glycosylase with associated apurinic/apyrimidinic (AP) lyase function that catalyzes the first step in base excision repair (BER), the primary repair pathway for the repair of oxidative DNA damage. The DNA N-glycosylase activity releases the damaged DNA base from DNA by cleaving the N-glycosidic bond, leaving an AP site. The AP-lyase activity cleaves the phosphodiester bond 3' to the AP site by a beta-elimination. Primarily recognizes and repairs oxidative base damage of pyrimidines. Also has 8-oxo-7,8-dihydroguanine (8-oxoG) DNA glycosylase activity. Acts preferentially on DNA damage opposite guanine residues in DNA. Is able to process lesions in nucleosomes without requiring or inducing nucleosome disruption. This Homo sapiens (Human) protein is Endonuclease III-like protein 1.